A 118-amino-acid polypeptide reads, in one-letter code: Holo-[acyl-carrier-protein] synthase (118 aa).

Residues Asp-9 and Glu-52 each contribute to the Mg(2+) site.

It belongs to the P-Pant transferase superfamily. AcpS family. Requires Mg(2+) as cofactor.

The protein resides in the cytoplasm. The enzyme catalyses apo-[ACP] + CoA = holo-[ACP] + adenosine 3',5'-bisphosphate + H(+). Its function is as follows. Transfers the 4'-phosphopantetheine moiety from coenzyme A to a Ser of acyl-carrier-protein. The chain is Holo-[acyl-carrier-protein] synthase from Frankia casuarinae (strain DSM 45818 / CECT 9043 / HFP020203 / CcI3).